Reading from the N-terminus, the 89-residue chain is Diphthamide biosynthesis protein 3 (89 aa).

The DPH-type MB domain maps to 5-61 (FYDEIELEDMSYDDEKDVFHYPCPCGDRFEITRQQLKDAEDVARCPSCSLIIRVVFD). Fe cation-binding residues include Cys-27, Cys-29, Cys-49, and Cys-52.

It belongs to the DPH3 family. Component of the 2-(3-amino-3-carboxypropyl)histidine synthase complex composed of DPH1, DPH2, DPH3 and a NADH-dependent reductase, predominantly CBR1. The cofactor is Fe(2+).

Its subcellular location is the cytoplasm. The protein resides in the nucleus. It catalyses the reaction [3Fe-4S](1+)-[protein] + Fe(2+)-[Dph3] = [3Fe-4S](0)-[protein] + Fe(3+)-[Dph3]. The enzyme catalyses 2 [3Fe-4S](0)-[protein] + 2 Fe(2+)-[Dph3] + NADH = 2 [4Fe-4S](1+)-[protein] + 2 [Dph3] + NAD(+) + H(+). It participates in protein modification; peptidyl-diphthamide biosynthesis. Its function is as follows. Required for the first step of diphthamide biosynthesis, a post-translational modification of histidine which occurs in elongation factor 2. DPH1 and DPH2 transfer a 3-amino-3-carboxypropyl (ACP) group from S-adenosyl-L-methionine (SAM) to a histidine residue, the reaction is assisted by a reduction system comprising KTI11/DPH3 and a NADH-dependent reductase, predominantly CBR1. Acts as an electron donor to reduce the Fe-S cluster in DPH1-DPH2 keeping the [4Fe-4S] clusters in the active and reduced state. Restores iron to DPH1-DPH2 iron-sulfur clusters which have degraded from [4Fe-4S] to [3Fe-4S] by donating an iron atom to reform [4Fe-4S] clusters, in a manner dependent on the presence of elongation factor 2 and SAM. Associates with the elongator complex and is required for tRNA Wobble base modifications mediated by the elongator complex. The elongator complex is required for multiple tRNA modifications, including mcm5U (5-methoxycarbonylmethyl uridine), mcm5s 2U (5-methoxycarbonylmethyl-2-thiouridine), and ncm5U (5-carbamoylmethyl uridine). The chain is Diphthamide biosynthesis protein 3 (DPH3) from Mycosarcoma maydis (Corn smut fungus).